Reading from the N-terminus, the 333-residue chain is Ribosomal RNA small subunit methyltransferase H (333 aa).

S-adenosyl-L-methionine is bound by residues 36–38 (GGY), Asp54, Phe81, Asp102, and Gln109.

This sequence belongs to the methyltransferase superfamily. RsmH family.

Its subcellular location is the cytoplasm. It catalyses the reaction cytidine(1402) in 16S rRNA + S-adenosyl-L-methionine = N(4)-methylcytidine(1402) in 16S rRNA + S-adenosyl-L-homocysteine + H(+). Its function is as follows. Specifically methylates the N4 position of cytidine in position 1402 (C1402) of 16S rRNA. This is Ribosomal RNA small subunit methyltransferase H from Afipia carboxidovorans (strain ATCC 49405 / DSM 1227 / KCTC 32145 / OM5) (Oligotropha carboxidovorans).